We begin with the raw amino-acid sequence, 161 residues long: TM2 domain-containing protein DDB_G0278163 (161 aa).

Residues 1-24 (MGHHHHHHGGSGHHHHHHHHGSGH) lie on the Cytoplasmic side of the membrane. The chain crosses the membrane as a helical span at residues 25–45 (YGGGAVLVTPIVTPVPVVYGS). The Extracellular segment spans residues 46–54 (RSSSYCPKS). The TM2 domain maps to 52–100 (PKSMTVAYVLWFFFGILGFHRLYLGRVGTFFLYFFTAGVFGLGWLFDAF). A helical membrane pass occupies residues 55–75 (MTVAYVLWFFFGILGFHRLYL). Residues 76–80 (GRVGT) are Cytoplasmic-facing. The helical transmembrane segment at 81–101 (FFLYFFTAGVFGLGWLFDAFY) threads the bilayer. Residues 102-161 (THKMVKHYNECEFTKSCVGQSPPATIPIYQSEGAYPTYQQVPQQPPQFYQPQQQQPQYQP) lie on the Extracellular side of the membrane. A disordered region spans residues 139-161 (YQQVPQQPPQFYQPQQQQPQYQP).

It belongs to the TM2 family.

The protein resides in the membrane. This Dictyostelium discoideum (Social amoeba) protein is TM2 domain-containing protein DDB_G0278163.